Here is a 373-residue protein sequence, read N- to C-terminus: Cytoplasmic tRNA 2-thiolation protein 1 (373 aa).

This sequence belongs to the TtcA family. CTU1/NCS6/ATPBD3 subfamily.

Its subcellular location is the cytoplasm. The protein operates within tRNA modification; 5-methoxycarbonylmethyl-2-thiouridine-tRNA biosynthesis. Functionally, plays a central role in 2-thiolation of mcm(5)S(2)U at tRNA wobble positions of tRNA(Lys), tRNA(Glu) and tRNA(Gln). Directly binds tRNAs and probably acts by catalyzing adenylation of tRNAs, an intermediate required for 2-thiolation. It is unclear whether it acts as a sulfurtransferase that transfers sulfur from thiocarboxylated URM1 onto the uridine of tRNAs at wobble position. Prior mcm(5) tRNA modification by the elongator complex is required for 2-thiolation. May also be involved in protein urmylation. This is Cytoplasmic tRNA 2-thiolation protein 1 from Malassezia globosa (strain ATCC MYA-4612 / CBS 7966) (Dandruff-associated fungus).